We begin with the raw amino-acid sequence, 245 residues long: NAD-dependent protein deacylase 1 (245 aa).

One can recognise a Deacetylase sirtuin-type domain in the interval 1–243; that stretch reads MDEKLLKTIA…DELVRHVRKA (243 aa). 20–39 lines the NAD(+) pocket; the sequence is GAGVSAESGIPTFRGKDGLW. Tyrosine 64 and arginine 67 together coordinate substrate. NAD(+) is bound at residue 98–101; the sequence is QNVD. Residue histidine 116 is the Proton acceptor of the active site. Zn(2+) is bound by residues cysteine 124, cysteine 127, cysteine 145, and cysteine 148. NAD(+)-binding positions include 185–187, 211–213, and alanine 229; these read GTS and NPD.

Belongs to the sirtuin family. Class III subfamily. Zn(2+) serves as cofactor.

It is found in the cytoplasm. The enzyme catalyses N(6)-acetyl-L-lysyl-[protein] + NAD(+) + H2O = 2''-O-acetyl-ADP-D-ribose + nicotinamide + L-lysyl-[protein]. It catalyses the reaction N(6)-succinyl-L-lysyl-[protein] + NAD(+) + H2O = 2''-O-succinyl-ADP-D-ribose + nicotinamide + L-lysyl-[protein]. Functionally, NAD-dependent lysine deacetylase and desuccinylase that specifically removes acetyl and succinyl groups on target proteins. Modulates the activities of several proteins which are inactive in their acylated form. Deacetylates the N-terminal lysine residue of Alba, the major archaeal chromatin protein and that, in turn, increases Alba's DNA binding affinity, thereby repressing transcription. This is NAD-dependent protein deacylase 1 from Archaeoglobus fulgidus (strain ATCC 49558 / DSM 4304 / JCM 9628 / NBRC 100126 / VC-16).